The chain runs to 96 residues: (4S)-4-hydroxy-5-phosphonooxypentane-2,3-dione isomerase (96 aa).

Positions 2–91 constitute an ABM domain; it reads HVTLVEINVK…MTGPRKKTVF (90 aa).

It belongs to the LsrG family. In terms of assembly, homodimer.

The protein localises to the cytoplasm. It catalyses the reaction (2S)-2-hydroxy-3,4-dioxopentyl phosphate = 3-hydroxy-2,4-dioxopentyl phosphate. Functionally, involved in the degradation of phospho-AI-2, thereby terminating induction of the lsr operon and closing the AI-2 signaling cycle. Catalyzes the conversion of (4S)-4-hydroxy-5-phosphonooxypentane-2,3-dione (P-DPD) to 3-hydroxy-5-phosphonooxypentane-2,4-dione (P-HPD). This is (4S)-4-hydroxy-5-phosphonooxypentane-2,3-dione isomerase from Yersinia pseudotuberculosis serotype O:1b (strain IP 31758).